We begin with the raw amino-acid sequence, 108 residues long: uncharacterized protein (108 aa).

3 helical membrane passes run 4–24, 46–66, and 81–101; these read IIFL…FFSM, GMMV…IFIG, and IMAI…WFVL.

It is found in the cell membrane. This is an uncharacterized protein from Escherichia coli O157:H7.